We begin with the raw amino-acid sequence, 93 residues long: Protein NONRESPONDING TO OXYLIPINS 2, mitochondrial (93 aa).

The N-terminal 27 residues, 1–27, are a transit peptide targeting the mitochondrion; sequence MASRCRSLSKPAFSAFRSAMNKPSIRP.

As to expression, expressed in cotyledons, roots and flowers.

The protein resides in the mitochondrion. In terms of biological role, essential for mitochondrial morphology, functionality and distribution. Contributes to 9-lipoxygenase (9-LOX)-derived oxylipin synthesis, but not to brassinosteroids (BRs) signaling. Required for waving-inducing oxylipin 9-hydroxyoctadecatrienoic acid and derivatives (e.g. 9-HOT, 2-HOE, 13-HOT, 13-HOD, 13-KOD, 12,13-KHOD, 9-HOT, 9-HOD, 9-KOT, 9-KOD and 9,10-KHOE)-mediated root development regulation, including callose deposition, root waving and lateral roots formation. Involved in basal plant defense toward pathogenic bacteria (e.g. Pseudomonas syringae pv tomato), both in compatible (e.g. Pst DC3000) and incompatible (e.g. Pst DC3000 avrRPM1) interactions, as well as against obligate biotrophic pathogenic fungi (e.g. Golovinomyces cichoracearum), probably via the promotion of callose deposition in the cell wall. Confers sensitivity to the herbicide isoxaben, a herbicide inhibiting cellulose synthesis and altering the cell wall. This chain is Protein NONRESPONDING TO OXYLIPINS 2, mitochondrial, found in Arabidopsis thaliana (Mouse-ear cress).